Consider the following 351-residue polypeptide: 1-acylglycerol-3-phosphate O-acyltransferase ABHD5 (351 aa).

Positions proline 79–proline 184 constitute an AB hydrolase-1 domain. Serine 124 carries the phosphoserine modification. Residues histidine 329–aspartate 334 carry the HXXXXD motif motif.

Belongs to the peptidase S33 family. ABHD4/ABHD5 subfamily. In terms of assembly, interacts with ADRP and PLIN. Interacts with PNPLA2. Interacts with PLIN5; promotes interaction with PNPLA2.

Its subcellular location is the cytoplasm. It is found in the lipid droplet. The enzyme catalyses a 1-acyl-sn-glycero-3-phosphate + an acyl-CoA = a 1,2-diacyl-sn-glycero-3-phosphate + CoA. The catalysed reaction is 1-(9Z-octadecenoyl)-sn-glycero-3-phosphate + (9Z)-octadecenoyl-CoA = 1,2-di-(9Z-octadecenoyl)-sn-glycero-3-phosphate + CoA. It carries out the reaction 1-(9Z-octadecenoyl)-sn-glycero-3-phosphate + hexadecanoyl-CoA = 1-(9Z)-octadecenoyl-2-hexadecanoyl-sn-glycero-3-phosphate + CoA. It catalyses the reaction 1-(9Z-octadecenoyl)-sn-glycero-3-phosphate + octadecanoyl-CoA = 1-(9Z-octadecenoyl)-2-octadecanoyl-sn-glycero-3-phosphate + CoA. The enzyme catalyses 1-(9Z-octadecenoyl)-sn-glycero-3-phosphate + (5Z,8Z,11Z,14Z)-eicosatetraenoyl-CoA = 1-(9Z)-octadecenoyl-2-(5Z,8Z,11Z,14Z)-eicosatetraenoyl-sn-glycero-3-phosphate + CoA. The catalysed reaction is eicosanoyl-CoA + 1-(9Z-octadecenoyl)-sn-glycero-3-phosphate = 1-(9Z)-octadecenoyl-2-eicosanoyl-sn-glycero-3-phosphate + CoA. It carries out the reaction 1-hexadecanoyl-sn-glycero-3-phosphate + (9Z)-octadecenoyl-CoA = 1-hexadecanoyl-2-(9Z-octadecenoyl)-sn-glycero-3-phosphate + CoA. It catalyses the reaction 1-octadecanoyl-sn-glycero-3-phosphate + (9Z)-octadecenoyl-CoA = 1-octadecanoyl-2-(9Z-octadecenoyl)-sn-glycero-3-phosphate + CoA. The enzyme catalyses 1-(5Z,8Z,11Z,14Z-eicosatetraenoyl)-sn-glycero-3-phosphate + (9Z)-octadecenoyl-CoA = 1-(5Z,8Z,11Z,14Z)-eicosatetraenoyl-2-(9Z)-octadecenoyl-sn-glycero-3-phosphate + CoA. Its activity is regulated as follows. Acyltransferase activity is inhibited by detergents such as Triton X-100 and 3-[(3-cholamidopropyl)dimethylammonio]-1-propanesulfonate (CHAPS). Acyltransferase activity is inhibited by the presence of magnesium and calcium. Functionally, coenzyme A-dependent lysophosphatidic acid acyltransferase that catalyzes the transfer of an acyl group on a lysophosphatidic acid. Functions preferentially with 1-oleoyl-lysophosphatidic acid followed by 1-palmitoyl-lysophosphatidic acid, 1-stearoyl-lysophosphatidic acid and 1-arachidonoyl-lysophosphatidic acid as lipid acceptor. Functions preferentially with arachidonoyl-CoA followed by oleoyl-CoA as acyl group donors. Functions in phosphatidic acid biosynthesis. May regulate the cellular storage of triacylglycerol through activation of the phospholipase PNPLA2. Involved in keratinocyte differentiation. Regulates lipid droplet fusion. This Rattus norvegicus (Rat) protein is 1-acylglycerol-3-phosphate O-acyltransferase ABHD5.